The sequence spans 457 residues: Tryptophan aminotransferase-related protein 3 (457 aa).

The helical transmembrane segment at 6 to 26 threads the bilayer; the sequence is LLIAGSIILNLVFTIHILYNN. Pyridoxal 5'-phosphate contacts are provided by residues Tyr123, 163–164, Asn237, 257–260, 280–283, and Arg291; these read AT, DYAY, and SLSK. Lys283 is modified (N6-(pyridoxal phosphate)lysine).

The protein belongs to the alliinase family. The cofactor is pyridoxal 5'-phosphate.

The protein resides in the membrane. Probable aminotransferase. In Arabidopsis thaliana (Mouse-ear cress), this protein is Tryptophan aminotransferase-related protein 3 (TAR3).